Here is a 138-residue protein sequence, read N- to C-terminus: ATP synthase epsilon chain (138 aa).

Belongs to the ATPase epsilon chain family. F-type ATPases have 2 components, CF(1) - the catalytic core - and CF(0) - the membrane proton channel. CF(1) has five subunits: alpha(3), beta(3), gamma(1), delta(1), epsilon(1). CF(0) has three main subunits: a, b and c.

It is found in the cell inner membrane. Functionally, produces ATP from ADP in the presence of a proton gradient across the membrane. The protein is ATP synthase epsilon chain of Trichlorobacter lovleyi (strain ATCC BAA-1151 / DSM 17278 / SZ) (Geobacter lovleyi).